The following is a 571-amino-acid chain: Coenzyme A biosynthesis protein 3 (571 aa).

Disordered stretches follow at residues 1–72 (MTDE…YKND) and 100–120 (INTS…PSLP). Over residues 8-35 (SDQNMNGKQGVNLISSLPTTQVPVSILT) the composition is skewed to polar residues. Ser-42 carries the phosphoserine modification. Positions 43–59 (IHDESNFERSDSHEDQS) are enriched in basic and acidic residues. Polar residues predominate over residues 60-72 (KSNSNRRNIYKND). Phosphoserine occurs at positions 116, 121, and 124. Disordered regions lie at residues 140–171 (ISNK…LQEQ) and 209–244 (IFKE…SMEK). The segment covering 146-171 (KQQQQQEQLQQNQQQEEQQKAQLQEQ) has biased composition (low complexity). Phosphoserine is present on Ser-264. Positions 507–571 (RDEETGDKEQ…EDEEDVKTEV (65 aa)) are disordered. Acidic residues predominate over residues 516–571 (QEQEEQEGADNEDDDDEDDEEDEEDEEEEEALNETASDESNDEEDEEDEEDVKTEV).

Belongs to the HFCD (homooligomeric flavin containing Cys decarboxylase) superfamily. Component of the phosphopantothenoylcysteine decarboxylase (PPCDC) complex, a heterotrimer composed of CAB3, HAL3 and VHS3.

It is found in the cytoplasm. Component of the phosphopantothenoylcysteine decarboxylase (PPCDC) involved in the coenzyme A synthesis. In Saccharomyces cerevisiae (strain ATCC 204508 / S288c) (Baker's yeast), this protein is Coenzyme A biosynthesis protein 3 (CAB3).